The primary structure comprises 155 residues: Probable calcium-binding protein CML44 (155 aa).

EF-hand domains follow at residues 6–41 (ITTN…LGWA), 85–120 (DNDE…LGFE), and 130–155 (RMIR…ILHV). Ca(2+) contacts are provided by D19, N21, D23, E30, D98, N100, D102, Y104, and E109.

Potential calcium sensor. The polypeptide is Probable calcium-binding protein CML44 (CML44) (Arabidopsis thaliana (Mouse-ear cress)).